A 249-amino-acid polypeptide reads, in one-letter code: DNA repair protein RecO (249 aa).

It belongs to the RecO family.

Involved in DNA repair and RecF pathway recombination. The polypeptide is DNA repair protein RecO (Polaromonas naphthalenivorans (strain CJ2)).